A 231-amino-acid polypeptide reads, in one-letter code: Extracellular deoxyribonuclease (231 aa).

A signal peptide spans 1–20 (MMIFRFVTTLAASLPLLTFA).

Belongs to the EndA/NucM nuclease family.

It is found in the secreted. In Vibrio cholerae serotype O1 (strain ATCC 39315 / El Tor Inaba N16961), this protein is Extracellular deoxyribonuclease (dns).